The sequence spans 705 residues: Translation factor GUF1 homolog, mitochondrial (705 aa).

Residues 1-20 constitute a mitochondrion transit peptide; it reads MVCHRYLLGLGASTLCLRRL. The tract at residues 72–92 is disordered; that stretch reads PVEDNGTTNLTGTGEATSETG. Positions 76 to 90 are enriched in polar residues; it reads NGTTNLTGTGEATSE. The tr-type G domain maps to 105 to 288; that stretch reads NRMRNFCIIA…AVVERIPPPK (184 aa). Residues 114–121, 181–185, and 235–238 each bind GTP; these read AHVDHGKS, DTPGH, and NKID.

The protein belongs to the TRAFAC class translation factor GTPase superfamily. Classic translation factor GTPase family. LepA subfamily.

The protein localises to the mitochondrion inner membrane. It carries out the reaction GTP + H2O = GDP + phosphate + H(+). Functionally, promotes mitochondrial protein synthesis. May act as a fidelity factor of the translation reaction, by catalyzing a one-codon backward translocation of tRNAs on improperly translocated ribosomes. Binds to mitochondrial ribosomes in a GTP-dependent manner. The chain is Translation factor GUF1 homolog, mitochondrial from Babesia bovis.